The chain runs to 554 residues: Muellerian-inhibiting factor (554 aa).

Residues 1–24 (MQGPHLSPLVLLLATMGAVLQPEA) form the signal peptide. Residues 25–446 (VENLATNTRG…GREGRGRTGR (422 aa)) constitute a propeptide that is removed on maturation. 3 N-linked (GlcNAc...) asparagine glycosylation sites follow: N62, N326, and N410. 3 disulfides stabilise this stretch: C456–C520, C482–C551, and C486–C553.

This sequence belongs to the TGF-beta family. As to quaternary structure, homodimer; disulfide-linked. Preproprotein is proteolytically processed to generate N- and C-terminal cleavage products that homodimerize and associate to form a biologically active non-covalent complex. Binding of the non-covalent complex to AMHRII induces dissociation of the pro-region from the mature C-terminal dimer. The N-terminal portion of the protein, despite having no intrinsic activity, has the role of amplifying the activity of the C-terminus. Expressed in Sertoli cells of fetal testes, and in testes just after birth, but absent in adult testes. In female, AMH is expressed after birth in the granulosa cells of the follicle.

It localises to the secreted. Its function is as follows. Plays an important role in several reproductive functions, including Muellerian duct regression during male fetal sexua,l differentiation and in the adult plays a role in Leydig cell differentiation and function. In female acts as a negative regulator of the primordial to primary follicle transition and decreases FSH sensitivity of growing follicles. Binds to its sole type II receptor, AMHR2 that recruits type I receptors ACVR1 and BMPR1A which subsequently activates the Smad pathway. The polypeptide is Muellerian-inhibiting factor (Amh) (Mus musculus (Mouse)).